The following is a 316-amino-acid chain: Aquaglyceroporin-2 (316 aa).

The segment at 1–31 is disordered; that stretch reads MADERGPINKSGPSSTYGATENNGESGGTRG. Topologically, residues 1–59 are cytoplasmic; the sequence is MADERGPINKSGPSSTYGATENNGESGGTRGAPATEDVIVIQDSGWYYIKFRFKEPFAE. Residues 11–24 are compositionally biased toward polar residues; the sequence is SGPSSTYGATENNG. Residues 60-80 form a helical membrane-spanning segment; it reads FLGTFILVAFGVGAIAQTVLS. At 81 to 86 the chain is on the extracellular side; the sequence is KGATGN. A helical membrane pass occupies residues 87–107; sequence WITIALGFGLGLALGIAVSGH. The Cytoplasmic portion of the chain corresponds to 108 to 131; that stretch reads YSGGHLNPAVTITLAIYRKFPWVK. The NPA 1 signature appears at 114–116; the sequence is NPA. The helical transmembrane segment at 132 to 152 threads the bilayer; that stretch reads VPVYITAQVLGAFVAAAVIYL. Over 153–187 the chain is Extracellular; that stretch reads NYLPAIYNFAGDKRDVIGANATAGIFATYPQPFMS. An N-linked (GlcNAc...) asparagine glycan is attached at Asn-172. A helical membrane pass occupies residues 188-208; the sequence is IGGAFFSEALGTFFLLFVILA. Over 209–219 the chain is Cytoplasmic; it reads MTDERNVPTTR. Residues 220 to 240 form a helical membrane-spanning segment; sequence IVAPITIGLTLTAIAISLGFE. Residues 241–271 lie on the Extracellular side of the membrane; the sequence is TGFSLNAARDFGPRLFTFFIGYGVEVFTAYK. The NPA 2 signature appears at 246–248; sequence NAA. The chain crosses the membrane as a helical span at residues 272–292; that stretch reads FYFWIPLVAPIVGGLVAGFVY. Topologically, residues 293-316 are cytoplasmic; sequence DSLLYWGEKSFLNKNVHHEHRAVA.

Belongs to the MIP/aquaporin (TC 1.A.8) family.

It localises to the cell membrane. It is found in the membrane. It carries out the reaction H2O(in) = H2O(out). The enzyme catalyses glycerol(in) = glycerol(out). Its activity is regulated as follows. Polyethylene glycol (PEG) stimulates whereas glycerol inhibits the aquaporin activity. Functionally, water channel required to facilitate the transport of water across membranes. Stimulates plant drought tolerance by facilitating the transport of water from the arbuscular mycorrhiza fungus to host plants. The protein is Aquaglyceroporin-2 of Rhizophagus irregularis (Arbuscular mycorrhizal fungus).